We begin with the raw amino-acid sequence, 277 residues long: Ribosomal RNA small subunit methyltransferase A (277 aa).

6 residues coordinate S-adenosyl-L-methionine: asparagine 24, leucine 26, glycine 51, glutamate 72, aspartate 96, and asparagine 123.

Belongs to the class I-like SAM-binding methyltransferase superfamily. rRNA adenine N(6)-methyltransferase family. RsmA subfamily.

The protein localises to the cytoplasm. The enzyme catalyses adenosine(1518)/adenosine(1519) in 16S rRNA + 4 S-adenosyl-L-methionine = N(6)-dimethyladenosine(1518)/N(6)-dimethyladenosine(1519) in 16S rRNA + 4 S-adenosyl-L-homocysteine + 4 H(+). Its function is as follows. Specifically dimethylates two adjacent adenosines (A1518 and A1519) in the loop of a conserved hairpin near the 3'-end of 16S rRNA in the 30S particle. May play a critical role in biogenesis of 30S subunits. The sequence is that of Ribosomal RNA small subunit methyltransferase A from Ureaplasma parvum serovar 3 (strain ATCC 27815 / 27 / NCTC 11736).